The chain runs to 360 residues: G-protein coupled receptor 15 (360 aa).

The Extracellular segment spans residues 1-33 (MDPEETSVYLDYYYATSPNPDIRETHSHVPYTS). A helical transmembrane segment spans residues 34–54 (VFLPVFYTAVFLTGVLGNLVL). Residues 55 to 69 (MGALHFKPGSRRLID) are Cytoplasmic-facing. A helical transmembrane segment spans residues 70–90 (IFIINLAASDFIFLVTLPLWV). At 91-120 (DKEASLGLWRTGSFLCKGSSYMISVNMHCS) the chain is on the extracellular side. The helical transmembrane segment at 121–141 (VFLLTCMSVDRYLAIVCPVVS) threads the bilayer. The Cytoplasmic portion of the chain corresponds to 142–149 (RKFRRTDC). Residues 150–170 (AYVVCASIWFISCLLGLPTLL) traverse the membrane as a helical segment. The Extracellular segment spans residues 171-192 (SRELTLIDDKPYCAEKKATPLK). A helical membrane pass occupies residues 193-213 (LIWSLVALIFTFFVPLLSIVT). Residues 214–239 (CYCCIARKLCAHYQQSGKHNKKLKKS) are Cytoplasmic-facing. Residues 240-260 (IKIIFIVVAAFLVSWLPFNTS) traverse the membrane as a helical segment. The Extracellular portion of the chain corresponds to 261–284 (KLLAIVSGLQQERYFPSAILQLGM). The helical transmembrane segment at 285-305 (EVSGPLAFANSCVNPFIYYIF) threads the bilayer. The Cytoplasmic segment spans residues 306-360 (DSYIRRAIVHCLCPCLKNYDFGSSTETSDSHLTKALSTFIHAEDFTRRRKRSVSL). A Phosphoserine modification is found at serine 359.

It belongs to the G-protein coupled receptor 1 family. Interacts with adapter YWHAE; this interaction promotes ER-to-Golgi transport of GPR15. In terms of processing, phosphorylation is necessary for YWHAE binding and efficient surface expression. O-glycosylated. Sialylated O-glycans in the N-terminal tail inhibits binding of GPR15LG. Post-translationally, sulfation is required for efficient binding of GPR15LG.

Its subcellular location is the cell membrane. Functionally, g protein-coupled receptor that plays an important role in immune homeostasis. Acts via its natural ligand GPR15LG, a chemokine-like polypeptide strongly expressed in gastrointestinal tissues. GPR15-GPR15LG signaling axis regulates intestinal homeostasis and inflammation through the migration of immune cells. Controls thereby the specific homing of T-cells, particularly FOXP3+ regulatory T-cells (Tregs), to the large intestine lamina propria. Also required for skin localization of thymus-derived dendritic epidermal T-cells. Plays an important role in mediating cytoprotective function as well as angiogenesis of thrombomodulin. Mechanistically, preferentially signals through the Gi/o pathway to inhibit adenylate cyclase activity and activate a phosphatidylinositol-calcium second messenger system that regulates the release of Ca(2+) ions from intracellular stores. This Macaca nemestrina (Pig-tailed macaque) protein is G-protein coupled receptor 15 (GPR15).